The following is a 245-amino-acid chain: 3-deoxy-manno-octulosonate cytidylyltransferase (245 aa).

The protein belongs to the KdsB family.

Its subcellular location is the cytoplasm. The enzyme catalyses 3-deoxy-alpha-D-manno-oct-2-ulosonate + CTP = CMP-3-deoxy-beta-D-manno-octulosonate + diphosphate. It participates in nucleotide-sugar biosynthesis; CMP-3-deoxy-D-manno-octulosonate biosynthesis; CMP-3-deoxy-D-manno-octulosonate from 3-deoxy-D-manno-octulosonate and CTP: step 1/1. The protein operates within bacterial outer membrane biogenesis; lipopolysaccharide biosynthesis. Functionally, activates KDO (a required 8-carbon sugar) for incorporation into bacterial lipopolysaccharide in Gram-negative bacteria. This is 3-deoxy-manno-octulosonate cytidylyltransferase from Acidobacterium capsulatum (strain ATCC 51196 / DSM 11244 / BCRC 80197 / JCM 7670 / NBRC 15755 / NCIMB 13165 / 161).